The following is a 343-amino-acid chain: Uroporphyrinogen decarboxylase (343 aa).

Substrate contacts are provided by residues 25–29 (RQAGR), Phe-44, Asp-75, Tyr-150, Ser-205, and His-320.

The protein belongs to the uroporphyrinogen decarboxylase family. Homodimer.

Its subcellular location is the cytoplasm. It carries out the reaction uroporphyrinogen III + 4 H(+) = coproporphyrinogen III + 4 CO2. It participates in porphyrin-containing compound metabolism; protoporphyrin-IX biosynthesis; coproporphyrinogen-III from 5-aminolevulinate: step 4/4. In terms of biological role, catalyzes the decarboxylation of four acetate groups of uroporphyrinogen-III to yield coproporphyrinogen-III. The sequence is that of Uroporphyrinogen decarboxylase from Mesorhizobium japonicum (strain LMG 29417 / CECT 9101 / MAFF 303099) (Mesorhizobium loti (strain MAFF 303099)).